A 311-amino-acid polypeptide reads, in one-letter code: Probable manganese-dependent inorganic pyrophosphatase (311 aa).

Mn(2+)-binding residues include His-9, Asp-13, Asp-15, Asp-75, His-97, and Asp-149.

It belongs to the PPase class C family. It depends on Mn(2+) as a cofactor.

The protein resides in the cytoplasm. It catalyses the reaction diphosphate + H2O = 2 phosphate + H(+). In Lactobacillus johnsonii (strain CNCM I-12250 / La1 / NCC 533), this protein is Probable manganese-dependent inorganic pyrophosphatase.